A 201-amino-acid chain; its full sequence is MEKFETFTGIAAPMPLVNIDTDMIIPKQFLKTIKRSGLGVHAFDEMRYDRQGNEVPDFVLNKPAYRESSILVAGDNFGCGSSREHAPWALADFGIKVVISTSFADIFFNNCFKNGMLPIVLPQEQVDLLMKDAEKGENARMTVDLEAQEITTSEGDVIKFDVDPFRKHCLINGLDDIGLTLEKADAIKAYEERAAQERPWV.

It belongs to the LeuD family. LeuD type 1 subfamily. As to quaternary structure, heterodimer of LeuC and LeuD.

It carries out the reaction (2R,3S)-3-isopropylmalate = (2S)-2-isopropylmalate. The protein operates within amino-acid biosynthesis; L-leucine biosynthesis; L-leucine from 3-methyl-2-oxobutanoate: step 2/4. Functionally, catalyzes the isomerization between 2-isopropylmalate and 3-isopropylmalate, via the formation of 2-isopropylmaleate. In Ruegeria sp. (strain TM1040) (Silicibacter sp.), this protein is 3-isopropylmalate dehydratase small subunit.